A 538-amino-acid polypeptide reads, in one-letter code: Ubiquitin domain-containing protein DSK2a (538 aa).

Positions valine 18 to serine 93 constitute a Ubiquitin-like domain. The disordered stretch occupies residues proline 95–leucine 120. The span at alanine 102–asparagine 119 shows a compositional bias: polar residues. STI1 domains are found at residues glycine 138–methionine 179 and asparagine 192–methionine 231. The tract at residues glutamine 289–proline 316 is disordered. 2 consecutive STI1 domains span residues serine 357 to leucine 394 and asparagine 398 to methionine 433. The 45-residue stretch at proline 491–serine 535 folds into the UBA domain.

Interacts with 'Lys-48'-linked polyubiquitin chains via its UBA domain. Interacts with RPN10 and RPN13. Interacts with PEX2 and PEX12. In terms of tissue distribution, ubiquitous with a strong expression level in inflorescence.

It localises to the nucleus. The protein localises to the cytoplasm. In terms of biological role, binds and presumably selects ubiquitin-conjugates for destruction. Prefers multiubiquitin chains rather than single ubiquitins, with a binding affinity for 'Lys-48'-linked ubiquitin chains. Acts as a ubiquitin receptor that associates with the 26S proteasomal docking subunit RPN10 for the indirect recognition of ubiquitinated substrates of ubiquitin/26S proteasome-mediated proteolysis (UPP). The protein is Ubiquitin domain-containing protein DSK2a (DSK2A) of Arabidopsis thaliana (Mouse-ear cress).